A 140-amino-acid chain; its full sequence is Large-conductance mechanosensitive channel (140 aa).

A run of 2 helical transmembrane segments spans residues 14–34 (VMDL…TGSL) and 85–105 (GAFV…FLLV).

It belongs to the MscL family. In terms of assembly, homopentamer.

It is found in the cell inner membrane. In terms of biological role, channel that opens in response to stretch forces in the membrane lipid bilayer. May participate in the regulation of osmotic pressure changes within the cell. This Sphingopyxis alaskensis (strain DSM 13593 / LMG 18877 / RB2256) (Sphingomonas alaskensis) protein is Large-conductance mechanosensitive channel.